A 394-amino-acid polypeptide reads, in one-letter code: Beta-ketothiolase BktB (394 aa).

C90 (acyl-thioester intermediate) is an active-site residue. Catalysis depends on proton acceptor residues H350 and C380.

Belongs to the thiolase-like superfamily. Thiolase family.

The catalysed reaction is an acyl-CoA + acetyl-CoA = a 3-oxoacyl-CoA + CoA. It catalyses the reaction 2 acetyl-CoA = acetoacetyl-CoA + CoA. In terms of biological role, required for efficient production of poly(beta-hydroxybutyrate-co-beta-hydroxyvalerate) (PHBV). Catalyzes the condensation of acetyl-CoA and propionyl-CoA to form beta-ketovaleryl-CoA, and the condensation of two acetyl-CoA molecules to form acetoacetyl-CoA. This Cupriavidus necator (strain ATCC 17699 / DSM 428 / KCTC 22496 / NCIMB 10442 / H16 / Stanier 337) (Ralstonia eutropha) protein is Beta-ketothiolase BktB (bktB).